The sequence spans 120 residues: Guanidine hydrolase-activating protein A (120 aa).

The Ni(2+) site is built by His2, Glu3, and Glu41. The Zn(2+) site is built by Cys74, Cys77, Cys91, and Cys94.

The protein belongs to the HypA/HybF family.

In terms of biological role, involved in the maturation of the nickel-dependent guanidine hydrolase GdmH. Required for nickel insertion into the metal center of GdmH. Seems to be required only for GdmH activation and not for activity. The chain is Guanidine hydrolase-activating protein A from Synechocystis sp. (strain ATCC 27184 / PCC 6803 / Kazusa).